The sequence spans 269 residues: Hemin import ATP-binding protein HmuV (269 aa).

The ABC transporter domain maps to 2–242 (LEVIHTGLNI…AMVEACFDLP (241 aa)). An ATP-binding site is contributed by 34 to 41 (GPNGAGKS).

Belongs to the ABC transporter superfamily. Heme (hemin) importer (TC 3.A.1.14.5) family. In terms of assembly, the complex is composed of two ATP-binding proteins (HmuV), two transmembrane proteins (HmuU) and a solute-binding protein (HmuT).

The protein localises to the cell inner membrane. In terms of biological role, part of the ABC transporter complex HmuTUV involved in hemin import. Responsible for energy coupling to the transport system. This is Hemin import ATP-binding protein HmuV from Methylobacillus flagellatus (strain ATCC 51484 / DSM 6875 / VKM B-1610 / KT).